A 471-amino-acid polypeptide reads, in one-letter code: Ribosome biogenesis protein YTM1 (471 aa).

Residues 10–92 (VTARFTTRDE…ETRLEVEYTR (83 aa)) form a ubiquitin-like (UBL) domain region. WD repeat units lie at residues 119–158 (SRAGAWSGGSVQSGQERILSASYDGLVRVWNTSGDVLATS), 165–203 (GRITSLKSAKWLSDKKIVAAGMDNTVRVFKYDEDTRTIT), and 210–249 (SHRWGVEDVAVHGPSSRILSASSDNTISLFSSNAKENPVA). A disordered region spans residues 245 to 274 (ENPVAPSSLLPNSTAASNKRQKLSKPDRTV). Residues 253 to 262 (LLPNSTAASN) are compositionally biased toward polar residues. WD repeat units follow at residues 285-325 (GHSS…CVDT), 327-366 (TTGHSLLSLCAIPSRNLIATGTSARHITLIDPRVSATQIS), 372-412 (GHKN…TGGQ), and 436-471 (GHGEGVKVFGVRWDKDVGIVSGGEDKKIQINRALGS). The tract at residues 412 to 440 (QVGEGQQGESVHTIHRQGQSGPGKGHGEG) is disordered.

It belongs to the WD repeat WDR12/YTM1 family. In terms of assembly, component of the NOP7 complex, composed of ERB1, NOP7 and YTM1. The complex is held together by ERB1, which interacts with NOP7 via its N-terminal domain and with YTM1 via a high-affinity interaction between the seven-bladed beta-propeller domains of the 2 proteins. The NOP7 complex associates with the 66S pre-ribosome. Interacts (via UBL domain) with MDN1 (via VWFA/MIDAS domain).

It is found in the nucleus. The protein resides in the nucleolus. The protein localises to the nucleoplasm. Component of the NOP7 complex, which is required for maturation of the 25S and 5.8S ribosomal RNAs and formation of the 60S ribosome. The polypeptide is Ribosome biogenesis protein YTM1 (Phaeosphaeria nodorum (strain SN15 / ATCC MYA-4574 / FGSC 10173) (Glume blotch fungus)).